A 126-amino-acid polypeptide reads, in one-letter code: Small ribosomal subunit protein uS13 (126 aa).

A disordered region spans residues 95–126 (GLPVRGQRTQTNARTRKGKKKTVAGKKKAGRK). Residues 108–126 (RTRKGKKKTVAGKKKAGRK) are compositionally biased toward basic residues.

The protein belongs to the universal ribosomal protein uS13 family. In terms of assembly, part of the 30S ribosomal subunit. Forms a loose heterodimer with protein S19. Forms two bridges to the 50S subunit in the 70S ribosome.

In terms of biological role, located at the top of the head of the 30S subunit, it contacts several helices of the 16S rRNA. In the 70S ribosome it contacts the 23S rRNA (bridge B1a) and protein L5 of the 50S subunit (bridge B1b), connecting the 2 subunits; these bridges are implicated in subunit movement. Contacts the tRNAs in the A and P-sites. The chain is Small ribosomal subunit protein uS13 from Thermobifida fusca (strain YX).